Consider the following 186-residue polypeptide: RNA-free ribonuclease P (186 aa).

This sequence belongs to the HARP family.

The catalysed reaction is Endonucleolytic cleavage of RNA, removing 5'-extranucleotides from tRNA precursor.. In terms of biological role, RNA-free RNase P that catalyzes the removal of the 5'-leader sequence from pre-tRNA to produce the mature 5'-terminus. This is RNA-free ribonuclease P from Hydrogenobaculum sp. (strain Y04AAS1).